Consider the following 312-residue polypeptide: MFKHETVLLHETVDMLEVKPDGIYVDATLGGAGHSEYLLNKLNEKGHLFAFDQDQTAIDNAKIKLADYSDKVTFIKANFRDMKEALNERGIEAVDGILYDLGVSSPQLDERERGFSYHQDAALDMRMDQEQELTAKIVVNEWSYQDLIRIFFQYGEEKFSKQIAREIERRREVKPIETTGELVDIIKTAIPAPARRKGGHPGKRTFQAIRIAVNDELGAVEDSLEKALTLLKPGGRISVITFHSLEDRITKHLFQEATKGPDLPPGLPVIPDEYKPDFKLATRKPIVPSEEELEQNNRARSAKLRVIEKIIK.

S-adenosyl-L-methionine contacts are provided by residues 32–34, Asp52, Phe79, Asp100, and Gln107; that span reads AGH.

It belongs to the methyltransferase superfamily. RsmH family.

The protein localises to the cytoplasm. The enzyme catalyses cytidine(1402) in 16S rRNA + S-adenosyl-L-methionine = N(4)-methylcytidine(1402) in 16S rRNA + S-adenosyl-L-homocysteine + H(+). Its function is as follows. Specifically methylates the N4 position of cytidine in position 1402 (C1402) of 16S rRNA. This chain is Ribosomal RNA small subunit methyltransferase H, found in Listeria monocytogenes serotype 4b (strain CLIP80459).